A 308-amino-acid polypeptide reads, in one-letter code: MSFAFSKVEFEEVEFQTLDKLTLKARLYSAAKRGPALVMNPGYNCTKEISAPSAAAYFQSKGITCLIYDPRNCGQSDGTPRREIDPHRQVDDYLDAMTYMSGLDIVDPDQIGFWGVSFSASIALAAACYDPRAKCIITVSPWTFDFGITAAEAKDNFSRLVAEREAQALGNEPFYTAMVDEEGNNPIHVNVDWGDEVRAAVNEFVSLSADGFVPTVTFQSYYKLFTFSPYLSLKFLGDTPLMMVVPEHDTVCPVEQQVKLYDAVEGPKEIYHAEGKRHLNMLAEDKFFEPMMKPQVEFFFKVMRGEAI.

In terms of domain architecture, AB hydrolase-1 spans 35–159; sequence PALVMNPGYN…AAEAKDNFSR (125 aa).

Belongs to the polyketide transferase af380 family.

The protein operates within secondary metabolite biosynthesis; terpenoid biosynthesis. Its function is as follows. Acyltransferase; part of the gene cluster that mediates the biosynthesis of various drimane-type sesquiterpene esters, compounds that exhibit diverse biological activities and are widely present in eukaryotes. The pathway begins with the synthesis of the backbone drimenol by the terpene cyclase drtB using farnesyl pyrophosphate (FPP) as substrate. The cytochrome P450 monooxygenase drtD is then responsible for the hydroxylations at C-6, C-9 and C-12, as well as the oxidation of hydroxyl groups at C-6 and C-11 to a ketone and an aldehyde, respectively. Then, the biosynthesis can go in two directions, either the hydroxylated drimenol is further hydroxylated at C-2 and C-3 by an enzyme(s) not associated with the drt cluster, or the FAD-binding oxidoreductase drtC further oxidizes C-11 or C-12 to form the butyrolactone ring. DrtB, drtD and drtC are solely responsible for the formation of the different drimane structures observed during drimane sesquiterpenes biosynthesis. The polyketide synthase drtA synthesizes different lengths (C6 and C8) of PKS chains, which are then oxidized to varying degrees by the short-chain dehydrogenase drtF. Finally, these PKS chains are transferred onto drimane sesquiterpenes by the acyltransferase drtE, forming the sesquiterpene esters. In addition to the different fatty acyl-CoA chains produced by drtA, drtE is also able to use cinnamoyl-CoA as a substrate. In Aspergillus calidoustus, this protein is Acyltransferase drtE.